A 242-amino-acid chain; its full sequence is Ubiquinone biosynthesis O-methyltransferase (242 aa).

Arginine 44, glycine 64, aspartate 85, and methionine 129 together coordinate S-adenosyl-L-methionine.

This sequence belongs to the methyltransferase superfamily. UbiG/COQ3 family.

It catalyses the reaction a 3-demethylubiquinol + S-adenosyl-L-methionine = a ubiquinol + S-adenosyl-L-homocysteine + H(+). The enzyme catalyses a 3-(all-trans-polyprenyl)benzene-1,2-diol + S-adenosyl-L-methionine = a 2-methoxy-6-(all-trans-polyprenyl)phenol + S-adenosyl-L-homocysteine + H(+). Its pathway is cofactor biosynthesis; ubiquinone biosynthesis. O-methyltransferase that catalyzes the 2 O-methylation steps in the ubiquinone biosynthetic pathway. In Salmonella typhi, this protein is Ubiquinone biosynthesis O-methyltransferase.